Here is a 357-residue protein sequence, read N- to C-terminus: MESSRGRPGPETDLLAVAEHQALVFGGGPGRTSSEPPAGLRVSGEEETENVGGANRHPRTSPKTSSCGVVHRPEREALENEPGPQGTLSGAGSRRGAPGAEHEPSLSSRHKNPAPPEGKPSSGRDCRRGGPGGGMDVEQQEEEDNDEEAAAGSRAGRSFSSRLQDSRSLDGLSEACGGAGSSGSAESGAGGGRRATISSPLELEGTVSRHGDLTHFVANNLQLKIRLSGAPPPPPSAPARPCPAPAPTPTPAIPPIDPEVLRDLERLSRELGGRVDRLLRGLGGAVQELTALSVGCIQTYRDAVDSLGEAVDMSIKGMYTLLARCEELERALQPVQGLARQVRDIRRTLEVLEALCK.

Residues 20 to 196 (HQALVFGGGP…SGAGGGRRAT (177 aa)) form a disordered region. The span at 90–99 (GAGSRRGAPG) shows a compositional bias: low complexity. The segment covering 138-149 (EQQEEEDNDEEA) has biased composition (acidic residues). The segment covering 150–162 (AAGSRAGRSFSSR) has biased composition (low complexity). Ser-168 carries the phosphoserine modification. Thr-196 carries the post-translational modification Phosphothreonine. Ser-199 is subject to Phosphoserine. Residues 227–256 (LSGAPPPPPSAPARPCPAPAPTPTPAIPPI) form a disordered region. Residues 230 to 256 (APPPPPSAPARPCPAPAPTPTPAIPPI) are compositionally biased toward pro residues.

Belongs to the BORCS6 family. As to quaternary structure, component of the BLOC-one-related complex (BORC) which is composed of BLOC1S1, BLOC1S2, BORCS5, BORCS6, BORCS7, BORCS8, KXD1 and SNAPIN.

The protein localises to the lysosome membrane. Its function is as follows. As part of the BORC complex may play a role in lysosomes movement and localization at the cell periphery. Associated with the cytosolic face of lysosomes, the BORC complex may recruit ARL8B and couple lysosomes to microtubule plus-end-directed kinesin motor. In Homo sapiens (Human), this protein is BLOC-1-related complex subunit 6.